Consider the following 564-residue polypeptide: Phenylalanine--tRNA ligase beta subunit (564 aa).

The 77-residue stretch at 286 to 362 folds into the B5 domain; sequence YFQNTLEVSV…IGRGLDSFKP (77 aa). Residues Asp340, Asp346, Glu349, and Glu350 each coordinate Mg(2+).

It belongs to the phenylalanyl-tRNA synthetase beta subunit family. Type 2 subfamily. As to quaternary structure, tetramer of two alpha and two beta subunits. It depends on Mg(2+) as a cofactor.

The protein resides in the cytoplasm. The catalysed reaction is tRNA(Phe) + L-phenylalanine + ATP = L-phenylalanyl-tRNA(Phe) + AMP + diphosphate + H(+). The protein is Phenylalanine--tRNA ligase beta subunit of Borrelia hermsii (strain HS1 / DAH).